A 175-amino-acid polypeptide reads, in one-letter code: NAD(P)H-quinone oxidoreductase subunit I, chloroplastic (175 aa).

2 consecutive 4Fe-4S ferredoxin-type domains span residues 55–84 (GRIH…VNWE) and 95–124 (QTYS…MTEE). 8 residues coordinate [4Fe-4S] cluster: Cys64, Cys67, Cys70, Cys74, Cys104, Cys107, Cys110, and Cys114.

The protein belongs to the complex I 23 kDa subunit family. As to quaternary structure, NDH is composed of at least 16 different subunits, 5 of which are encoded in the nucleus. The cofactor is [4Fe-4S] cluster.

It is found in the plastid. The protein localises to the chloroplast thylakoid membrane. It carries out the reaction a plastoquinone + NADH + (n+1) H(+)(in) = a plastoquinol + NAD(+) + n H(+)(out). The enzyme catalyses a plastoquinone + NADPH + (n+1) H(+)(in) = a plastoquinol + NADP(+) + n H(+)(out). In terms of biological role, NDH shuttles electrons from NAD(P)H:plastoquinone, via FMN and iron-sulfur (Fe-S) centers, to quinones in the photosynthetic chain and possibly in a chloroplast respiratory chain. The immediate electron acceptor for the enzyme in this species is believed to be plastoquinone. Couples the redox reaction to proton translocation, and thus conserves the redox energy in a proton gradient. In Chlorokybus atmophyticus (Soil alga), this protein is NAD(P)H-quinone oxidoreductase subunit I, chloroplastic.